The sequence spans 195 residues: ATP-dependent Clp protease proteolytic subunit 2 (195 aa).

Serine 92 serves as the catalytic Nucleophile. The active site involves histidine 117.

It belongs to the peptidase S14 family. In terms of assembly, fourteen ClpP subunits assemble into 2 heptameric rings which stack back to back to give a disk-like structure with a central cavity, resembling the structure of eukaryotic proteasomes.

The protein localises to the cytoplasm. The enzyme catalyses Hydrolysis of proteins to small peptides in the presence of ATP and magnesium. alpha-casein is the usual test substrate. In the absence of ATP, only oligopeptides shorter than five residues are hydrolyzed (such as succinyl-Leu-Tyr-|-NHMec, and Leu-Tyr-Leu-|-Tyr-Trp, in which cleavage of the -Tyr-|-Leu- and -Tyr-|-Trp bonds also occurs).. In terms of biological role, cleaves peptides in various proteins in a process that requires ATP hydrolysis. Has a chymotrypsin-like activity. Plays a major role in the degradation of misfolded proteins. In Rhodococcus jostii (strain RHA1), this protein is ATP-dependent Clp protease proteolytic subunit 2.